Here is a 446-residue protein sequence, read N- to C-terminus: Probable carboxylesterase 16 (446 aa).

Positions 84–131 (PEPDSLRHKDNYNHQPRSDRRHSYGPNHNSPAPAERNESRRNSYGCNN) are disordered. Positions 87–105 (DSLRHKDNYNHQPRSDRRH) are enriched in basic and acidic residues. The Involved in the stabilization of the negatively charged intermediate by the formation of the oxyanion hole motif lies at 158-160 (HGG). Active-site residues include S274, D378, and H408.

This sequence belongs to the 'GDXG' lipolytic enzyme family. Expressed in roots, leaves, stems, flowers and siliques.

It catalyses the reaction a carboxylic ester + H2O = an alcohol + a carboxylate + H(+). Functionally, carboxylesterase acting on esters with varying acyl chain length. The protein is Probable carboxylesterase 16 (CXE16) of Arabidopsis thaliana (Mouse-ear cress).